Here is a 99-residue protein sequence, read N- to C-terminus: Plastocyanin (99 aa).

Residues 1 to 99 enclose the Plastocyanin-like domain; that stretch reads VEVLMGGSGG…IGMSGIVTVN (99 aa). Positions 37, 84, 87, and 92 each coordinate Cu cation.

This sequence belongs to the plastocyanin family. The cofactor is Cu(2+).

The protein localises to the plastid. It localises to the chloroplast thylakoid membrane. Its function is as follows. Participates in electron transfer between P700 and the cytochrome b6-f complex in photosystem I. This Ginkgo biloba (Ginkgo) protein is Plastocyanin (PETE).